Reading from the N-terminus, the 259-residue chain is Deoxyribose-phosphate aldolase (259 aa).

Catalysis depends on Asp102, which acts as the Proton donor/acceptor. The Schiff-base intermediate with acetaldehyde role is filled by Lys167. Residue Lys201 is the Proton donor/acceptor of the active site.

The protein belongs to the DeoC/FbaB aldolase family. DeoC type 2 subfamily.

It localises to the cytoplasm. It carries out the reaction 2-deoxy-D-ribose 5-phosphate = D-glyceraldehyde 3-phosphate + acetaldehyde. Its pathway is carbohydrate degradation; 2-deoxy-D-ribose 1-phosphate degradation; D-glyceraldehyde 3-phosphate and acetaldehyde from 2-deoxy-alpha-D-ribose 1-phosphate: step 2/2. Catalyzes a reversible aldol reaction between acetaldehyde and D-glyceraldehyde 3-phosphate to generate 2-deoxy-D-ribose 5-phosphate. This Escherichia coli O45:K1 (strain S88 / ExPEC) protein is Deoxyribose-phosphate aldolase.